The sequence spans 290 residues: Agmatinase (290 aa).

Residues His-112, Asp-135, His-137, Asp-139, Asp-216, and Asp-218 each contribute to the Mn(2+) site.

Belongs to the arginase family. Agmatinase subfamily. Requires Mn(2+) as cofactor.

It carries out the reaction agmatine + H2O = urea + putrescine. It participates in amine and polyamine biosynthesis; putrescine biosynthesis via agmatine pathway; putrescine from agmatine: step 1/1. In terms of biological role, catalyzes the formation of putrescine from agmatine. The sequence is that of Agmatinase (speB) from Bacillus subtilis (strain 168).